The sequence spans 419 residues: L-rhamnose isomerase (419 aa).

Residues His262, Asp294, and Asp296 each contribute to the Mn(2+) site.

The protein belongs to the rhamnose isomerase family. In terms of assembly, homotetramer. Mn(2+) serves as cofactor.

It localises to the cytoplasm. The enzyme catalyses L-rhamnopyranose = L-rhamnulose. It participates in carbohydrate degradation; L-rhamnose degradation; glycerone phosphate from L-rhamnose: step 1/3. In terms of biological role, catalyzes the interconversion of L-rhamnose and L-rhamnulose. In Escherichia coli O17:K52:H18 (strain UMN026 / ExPEC), this protein is L-rhamnose isomerase.